The sequence spans 266 residues: Ribosomal RNA small subunit methyltransferase A (266 aa).

6 residues coordinate S-adenosyl-L-methionine: N12, L14, G39, E61, D87, and N107.

The protein belongs to the class I-like SAM-binding methyltransferase superfamily. rRNA adenine N(6)-methyltransferase family. RsmA subfamily.

It localises to the cytoplasm. It carries out the reaction adenosine(1518)/adenosine(1519) in 16S rRNA + 4 S-adenosyl-L-methionine = N(6)-dimethyladenosine(1518)/N(6)-dimethyladenosine(1519) in 16S rRNA + 4 S-adenosyl-L-homocysteine + 4 H(+). Its function is as follows. Specifically dimethylates two adjacent adenosines (A1518 and A1519) in the loop of a conserved hairpin near the 3'-end of 16S rRNA in the 30S particle. May play a critical role in biogenesis of 30S subunits. This is Ribosomal RNA small subunit methyltransferase A from Nitratidesulfovibrio vulgaris (strain ATCC 29579 / DSM 644 / CCUG 34227 / NCIMB 8303 / VKM B-1760 / Hildenborough) (Desulfovibrio vulgaris).